The sequence spans 271 residues: MELKNELCTVLEQIKEKTPLVHHITNYVTVNDCANITLAIGGSPVMADDHKEVEDMVSIASAVVLNIGTLNERTIESFVLAGKKANELNIPVILDPVGAGATAFRSQTIEKILKEVKLSVLRGNMSEIKNIYGTGTQTKGVDSVDSSLDGGKEIAISLAKKLSCTVVITGEVDIVSDGNKTYAIQNGHKALSSITGTGCMSASLIGACCGTGKGILQGAILGTMIMGIAGEKANERLKVHEGLGSFKVYLMDAVSNFDQDDIRKRGKVDEI.

Position 46 (Met46) interacts with substrate. ATP-binding residues include Arg122 and Thr169. Residue Gly196 coordinates substrate.

The protein belongs to the Thz kinase family. Mg(2+) serves as cofactor.

It catalyses the reaction 5-(2-hydroxyethyl)-4-methylthiazole + ATP = 4-methyl-5-(2-phosphooxyethyl)-thiazole + ADP + H(+). It functions in the pathway cofactor biosynthesis; thiamine diphosphate biosynthesis; 4-methyl-5-(2-phosphoethyl)-thiazole from 5-(2-hydroxyethyl)-4-methylthiazole: step 1/1. Its function is as follows. Catalyzes the phosphorylation of the hydroxyl group of 4-methyl-5-beta-hydroxyethylthiazole (THZ). This Alkaliphilus oremlandii (strain OhILAs) (Clostridium oremlandii (strain OhILAs)) protein is Hydroxyethylthiazole kinase.